We begin with the raw amino-acid sequence, 453 residues long: Chromosomal replication initiator protein DnaA (453 aa).

Positions 1-74 are domain I, interacts with DnaA modulators; the sequence is MKEKQFWNRI…GFEIYDAEIT (74 aa). The segment at 74 to 113 is domain II; that stretch reads TPHYIFTKPQDTTSSQVEEATNLTLYDYSPKLVSIPYSDT. The tract at residues 114 to 331 is domain III, AAA+ region; the sequence is GLKEKYTFDN…GAINDITLIA (218 aa). 4 residues coordinate ATP: Gly158, Gly160, Lys161, and Thr162. The domain IV, binds dsDNA stretch occupies residues 332–453; it reads RVKKIKDITI…EIESIKKKIK (122 aa).

This sequence belongs to the DnaA family. As to quaternary structure, oligomerizes as a right-handed, spiral filament on DNA at oriC.

It localises to the cytoplasm. Its function is as follows. Plays an essential role in the initiation and regulation of chromosomal replication. ATP-DnaA binds to the origin of replication (oriC) to initiate formation of the DNA replication initiation complex once per cell cycle. Binds the DnaA box (a 9 base pair repeat at the origin) and separates the double-stranded (ds)DNA. Forms a right-handed helical filament on oriC DNA; dsDNA binds to the exterior of the filament while single-stranded (ss)DNA is stabiized in the filament's interior. The ATP-DnaA-oriC complex binds and stabilizes one strand of the AT-rich DNA unwinding element (DUE), permitting loading of DNA polymerase. After initiation quickly degrades to an ADP-DnaA complex that is not apt for DNA replication. Binds acidic phospholipids. The sequence is that of Chromosomal replication initiator protein DnaA from Streptococcus pneumoniae (strain P1031).